The primary structure comprises 404 residues: Cysteine desulfurase IscS (404 aa).

Pyridoxal 5'-phosphate is bound by residues 75-76, Asn-155, Gln-183, and 203-205; these read AT and SAH. Lys-206 is subject to N6-(pyridoxal phosphate)lysine. Residue Thr-243 coordinates pyridoxal 5'-phosphate. Cys-328 acts as the Cysteine persulfide intermediate in catalysis. Cys-328 serves as a coordination point for [2Fe-2S] cluster.

This sequence belongs to the class-V pyridoxal-phosphate-dependent aminotransferase family. NifS/IscS subfamily. As to quaternary structure, homodimer. Forms a heterotetramer with IscU, interacts with other sulfur acceptors. Pyridoxal 5'-phosphate serves as cofactor.

It localises to the cytoplasm. The catalysed reaction is (sulfur carrier)-H + L-cysteine = (sulfur carrier)-SH + L-alanine. The protein operates within cofactor biosynthesis; iron-sulfur cluster biosynthesis. Functionally, master enzyme that delivers sulfur to a number of partners involved in Fe-S cluster assembly, tRNA modification or cofactor biosynthesis. Catalyzes the removal of elemental sulfur atoms from cysteine to produce alanine. Functions as a sulfur delivery protein for Fe-S cluster synthesis onto IscU, an Fe-S scaffold assembly protein, as well as other S acceptor proteins. The protein is Cysteine desulfurase IscS of Buchnera aphidicola subsp. Schizaphis graminum (strain Sg).